Consider the following 217-residue polypeptide: 3-demethoxyubiquinol 3-hydroxylase (217 aa).

Fe cation is bound by residues E66, E96, H99, E148, E180, and H183.

This sequence belongs to the COQ7 family. Requires Fe cation as cofactor.

The protein resides in the cell membrane. It catalyses the reaction a 5-methoxy-2-methyl-3-(all-trans-polyprenyl)benzene-1,4-diol + AH2 + O2 = a 3-demethylubiquinol + A + H2O. The protein operates within cofactor biosynthesis; ubiquinone biosynthesis. Functionally, catalyzes the hydroxylation of 2-nonaprenyl-3-methyl-6-methoxy-1,4-benzoquinol during ubiquinone biosynthesis. The sequence is that of 3-demethoxyubiquinol 3-hydroxylase from Xanthomonas euvesicatoria pv. vesicatoria (strain 85-10) (Xanthomonas campestris pv. vesicatoria).